The sequence spans 485 residues: NADH-quinone oxidoreductase subunit N (485 aa).

The next 14 helical transmembrane spans lie at 8 to 28 (LIAL…MLSI), 35 to 55 (FLNA…LWFV), 71 to 91 (GFAM…CTFA), 105 to 125 (FYLL…ANHL), 127 to 147 (ALFL…GYAF), 159 to 179 (YTIL…LVYA), 203 to 223 (LLAG…LVPF), 235 to 255 (PAPV…GVVM), 271 to 291 (VVLG…ALSQ), 297 to 317 (LLGY…IALQ), 326 to 346 (VGVY…VVSL), 373 to 393 (AAVM…LGFI), 408 to 430 (WWLV…RVAV), and 455 to 475 (IVVL…QPLI).

The protein belongs to the complex I subunit 2 family. NDH-1 is composed of 13 different subunits. Subunits NuoA, H, J, K, L, M, N constitute the membrane sector of the complex.

The protein localises to the cell inner membrane. The enzyme catalyses a quinone + NADH + 5 H(+)(in) = a quinol + NAD(+) + 4 H(+)(out). NDH-1 shuttles electrons from NADH, via FMN and iron-sulfur (Fe-S) centers, to quinones in the respiratory chain. The immediate electron acceptor for the enzyme in this species is believed to be ubiquinone. Couples the redox reaction to proton translocation (for every two electrons transferred, four hydrogen ions are translocated across the cytoplasmic membrane), and thus conserves the redox energy in a proton gradient. The sequence is that of NADH-quinone oxidoreductase subunit N from Salmonella gallinarum (strain 287/91 / NCTC 13346).